A 316-amino-acid polypeptide reads, in one-letter code: Protoheme IX farnesyltransferase (316 aa).

9 helical membrane passes run 32 to 52 (VMSL…GQIN), 53 to 73 (PVLG…SGAL), 93 to 113 (IPAG…LSCF), 116 to 136 (AILG…TIFF), 152 to 172 (NIVI…ACVT), 180 to 200 (TVLF…LALF), 226 to 246 (IVAY…LGFA), 248 to 268 (FAYG…SIAV), and 289 to 309 (IFYL…AMLV).

This sequence belongs to the UbiA prenyltransferase family. Protoheme IX farnesyltransferase subfamily.

It localises to the cell inner membrane. The catalysed reaction is heme b + (2E,6E)-farnesyl diphosphate + H2O = Fe(II)-heme o + diphosphate. It functions in the pathway porphyrin-containing compound metabolism; heme O biosynthesis; heme O from protoheme: step 1/1. Functionally, converts heme B (protoheme IX) to heme O by substitution of the vinyl group on carbon 2 of heme B porphyrin ring with a hydroxyethyl farnesyl side group. This chain is Protoheme IX farnesyltransferase, found in Rhizobium etli (strain CIAT 652).